Reading from the N-terminus, the 215-residue chain is Ribosomal RNA small subunit methyltransferase G (215 aa).

S-adenosyl-L-methionine-binding positions include G77, F82, 130–131 (IE), and R146.

The protein belongs to the methyltransferase superfamily. RNA methyltransferase RsmG family.

Its subcellular location is the cytoplasm. The enzyme catalyses guanosine(527) in 16S rRNA + S-adenosyl-L-methionine = N(7)-methylguanosine(527) in 16S rRNA + S-adenosyl-L-homocysteine. In terms of biological role, specifically methylates the N7 position of guanine in position 527 of 16S rRNA. The sequence is that of Ribosomal RNA small subunit methyltransferase G from Bartonella bacilliformis (strain ATCC 35685 / KC583 / Herrer 020/F12,63).